We begin with the raw amino-acid sequence, 290 residues long: Agglutinin-2 (290 aa).

The N-terminal stretch at 1–35 is a signal peptide; it reads MAISNTNLLQTKKPISLPLLAFITLFLMLLNRVNS. A glycan (N-linked (GlcNAc...) asparagine) is linked at Asn155. Mn(2+)-binding residues include Glu165 and Asp167. The Ca(2+) site is built by Asp167, Asn171, and Asp175. Mn(2+) is bound by residues Asp175 and His180. N-linked (GlcNAc...) asparagine glycosylation occurs at Asn200.

This sequence belongs to the leguminous lectin family. In terms of assembly, homotetramer.

In terms of biological role, mannose/glucose binding bark lectin. Its function is as follows. Bark lectins are storage proteins that probably maintain stocks of nitrogen during dormant period. Self-aggregatable molecules that can bind their own carbohydrate side chains. They could also play a role in the plant's defense against phytophagous invertebrates or herbivorous higher animals. The sequence is that of Agglutinin-2 from Cladrastis kentukea (Yellow wood).